A 514-amino-acid polypeptide reads, in one-letter code: Peptide chain release factor 3 (514 aa).

A tr-type G domain is found at 8-268; it reads KKRRTFAIIS…TFLEFAPEPH (261 aa). GTP contacts are provided by residues 17-24, 85-89, and 139-142; these read SHPDAGKT, DTPGH, and NKLD.

This sequence belongs to the TRAFAC class translation factor GTPase superfamily. Classic translation factor GTPase family. PrfC subfamily.

The protein resides in the cytoplasm. In terms of biological role, increases the formation of ribosomal termination complexes and stimulates activities of RF-1 and RF-2. It binds guanine nucleotides and has strong preference for UGA stop codons. It may interact directly with the ribosome. The stimulation of RF-1 and RF-2 is significantly reduced by GTP and GDP, but not by GMP. This Streptococcus pyogenes serotype M18 (strain MGAS8232) protein is Peptide chain release factor 3.